The following is a 210-amino-acid chain: MSSAQNIKKSIMAPVLDNNPIALQVLGVCSALAVTTKLETAFVMTLAVTFVTALSNFSVSLIRNHIPNSVRIIVQMAIIASLVIVVDQVLKAYLYDISKQLSVFVGLIITNCIVMGRAEAFAMKSAPVPSLIDGIGNGLGYGFVLITVGFFRELFGSGKLFGMEVLPLVSNGGWYQPNGLMLLAPSAFFLIGFLIWVIRILKPEQVEAKE.

5 helical membrane-spanning segments follow: residues 42-62 (FVMTLAVTFVTALSNFSVSLI), 72-92 (IIVQMAIIASLVIVVDQVLKA), 103-123 (VFVGLIITNCIVMGRAEAFAM), 131-151 (LIDGIGNGLGYGFVLITVGFF), and 178-198 (NGLMLLAPSAFFLIGFLIWVI).

The protein belongs to the NqrDE/RnfAE family. In terms of assembly, composed of six subunits; NqrA, NqrB, NqrC, NqrD, NqrE and NqrF.

It localises to the cell inner membrane. It carries out the reaction a ubiquinone + n Na(+)(in) + NADH + H(+) = a ubiquinol + n Na(+)(out) + NAD(+). In terms of biological role, NQR complex catalyzes the reduction of ubiquinone-1 to ubiquinol by two successive reactions, coupled with the transport of Na(+) ions from the cytoplasm to the periplasm. NqrA to NqrE are probably involved in the second step, the conversion of ubisemiquinone to ubiquinol. The protein is Na(+)-translocating NADH-quinone reductase subunit D of Vibrio campbellii (strain ATCC BAA-1116).